The following is a 354-amino-acid chain: Protein Wnt-11 (354 aa).

An N-terminal signal peptide occupies residues 1–24 (MKPSPQFFLAAFLSLILQTGICYG). Asn-40 and Asn-90 each carry an N-linked (GlcNAc...) asparagine glycan. 11 disulfide bridges follow: Cys-80/Cys-91, Cys-130/Cys-138, Cys-140/Cys-157, Cys-209/Cys-223, Cys-211/Cys-218, Cys-283/Cys-314, Cys-299/Cys-309, Cys-313/Cys-353, Cys-329/Cys-344, Cys-331/Cys-341, and Cys-336/Cys-337. The O-palmitoleoyl serine; by PORCN moiety is linked to residue Ser-215. Asn-300 and Asn-304 each carry an N-linked (GlcNAc...) asparagine glycan.

It belongs to the Wnt family. Post-translationally, palmitoleoylation is required for efficient binding to frizzled receptors. Depalmitoleoylation leads to Wnt signaling pathway inhibition. Expressed in the dermatome. The expression domain is mutually exclusive to the other Wnt genes.

The protein localises to the secreted. It localises to the extracellular space. The protein resides in the extracellular matrix. Its function is as follows. Ligand for members of the frizzled family of seven transmembrane receptors. May play a role in the formation of dermal structure, both limb and feather buds. Is likely to signal over only few cell diameters. The protein is Protein Wnt-11 (WNT11) of Gallus gallus (Chicken).